Consider the following 212-residue polypeptide: ATP-dependent Clp protease proteolytic subunit (212 aa).

Catalysis depends on serine 114, which acts as the Nucleophile. Histidine 139 is an active-site residue.

The protein belongs to the peptidase S14 family. As to quaternary structure, fourteen ClpP subunits assemble into 2 heptameric rings which stack back to back to give a disk-like structure with a central cavity, resembling the structure of eukaryotic proteasomes.

The protein resides in the cytoplasm. The enzyme catalyses Hydrolysis of proteins to small peptides in the presence of ATP and magnesium. alpha-casein is the usual test substrate. In the absence of ATP, only oligopeptides shorter than five residues are hydrolyzed (such as succinyl-Leu-Tyr-|-NHMec, and Leu-Tyr-Leu-|-Tyr-Trp, in which cleavage of the -Tyr-|-Leu- and -Tyr-|-Trp bonds also occurs).. Its function is as follows. Cleaves peptides in various proteins in a process that requires ATP hydrolysis. Has a chymotrypsin-like activity. Plays a major role in the degradation of misfolded proteins. The chain is ATP-dependent Clp protease proteolytic subunit from Aromatoleum aromaticum (strain DSM 19018 / LMG 30748 / EbN1) (Azoarcus sp. (strain EbN1)).